Reading from the N-terminus, the 401-residue chain is Acetate kinase (401 aa).

Asn-9 is a Mg(2+) binding site. Lys-16 contacts ATP. Arg-88 serves as a coordination point for substrate. The active-site Proton donor/acceptor is the Asp-147. ATP is bound by residues 207–211 (HLGNG), 282–284 (DCR), and 333–337 (GIGEN). Glu-388 is a Mg(2+) binding site.

Belongs to the acetokinase family. Homodimer. Mg(2+) serves as cofactor. The cofactor is Mn(2+).

It localises to the cytoplasm. The enzyme catalyses acetate + ATP = acetyl phosphate + ADP. It participates in metabolic intermediate biosynthesis; acetyl-CoA biosynthesis; acetyl-CoA from acetate: step 1/2. Catalyzes the formation of acetyl phosphate from acetate and ATP. Can also catalyze the reverse reaction. This chain is Acetate kinase, found in Haemophilus influenzae (strain PittEE).